We begin with the raw amino-acid sequence, 333 residues long: Dioxygenase cnsJ (333 aa).

H153, D155, and H235 together coordinate Fe cation. Positions 309–333 (NAQPEGEDDGGMKPNEGEHVVEAQI) are disordered. Positions 323–333 (NEGEHVVEAQI) are enriched in basic and acidic residues.

Belongs to the PhyH family. Homodimer. Fe cation is required as a cofactor.

It functions in the pathway alkaloid biosynthesis. Functionally, dioxygenase; part of the gene cluster that mediates the biosynthesis of communesins, a prominent class of indole alkaloids with great potential as pharmaceuticals. Communesins are biosynthesized by the coupling of tryptamine and aurantioclavine, two building blocks derived from L-tryptophan. The L-tryptophan decarboxylase cnsB converts L-tryptophan to tryptamine, whereas the tryptophan dimethylallyltransferase cnsF converts L-tryptophan to 4-dimethylallyl tryptophan which is further transformed to aurantioclavine by the aurantioclavine synthase cnsA, probably aided by the catalase cnsD. The cytochrome P450 monooxygenase cnsC catalyzes the heterodimeric coupling between the two different indole moieties, tryptamine and aurantioclavine, to construct vicinal quaternary stereocenters and yield the heptacyclic communesin scaffold. The O-methyltransferase cnsE then methylates the communesin scaffold to produce communesin K, the simplest characterized communesin that contains the heptacyclic core. The dioxygenase cnsJ converts communesin K into communesin I. Acylation to introduce the hexadienyl group at position N16 of communesin I by the acyltransferase cnsK leads to the production of communesin B. The hexadienyl group is produced by the highly reducing polyketide synthase cnsI, before being hydrolytically removed from cnsI by the serine hydrolase cnsH, converted into hexadienyl-CoA by the CoA ligase cnsG, and then transferred to communesin I by cnsK. Surprisingly, cnsK may also be a promiscuous acyltransferase that can tolerate a range of acyl groups, including acetyl-, propionyl-, and butyryl-CoA, which lead to communesins A, G and H respectively. The roles of the alpha-ketoglutarate-dependent dioxygenases cnsM and cnsP have still to be determined. This Penicillium expansum (Blue mold rot fungus) protein is Dioxygenase cnsJ.